The sequence spans 272 residues: Phosphate import ATP-binding protein PstB (272 aa).

One can recognise an ABC transporter domain in the interval 26 to 267 (VAARNLNFYY…PADRRTQDYI (242 aa)). Position 58 to 65 (58 to 65 (GPSGCGKS)) interacts with ATP.

The protein belongs to the ABC transporter superfamily. Phosphate importer (TC 3.A.1.7) family. As to quaternary structure, the complex is composed of two ATP-binding proteins (PstB), two transmembrane proteins (PstC and PstA) and a solute-binding protein (PstS).

It localises to the cell inner membrane. The catalysed reaction is phosphate(out) + ATP + H2O = ADP + 2 phosphate(in) + H(+). Its function is as follows. Part of the ABC transporter complex PstSACB involved in phosphate import. Responsible for energy coupling to the transport system. The sequence is that of Phosphate import ATP-binding protein PstB from Nitrobacter hamburgensis (strain DSM 10229 / NCIMB 13809 / X14).